Reading from the N-terminus, the 471-residue chain is Casein kinase 1-like protein 9 (471 aa).

Residues 9 to 278 (FKLGRKIGSG…LKRLFRDLFI (270 aa)) enclose the Protein kinase domain. Residues 15-23 (IGSGSFGEL) and Lys38 each bind ATP. Asp128 functions as the Proton acceptor in the catalytic mechanism. The interval 300-471 (SSSGSSSRTR…RSLELLTLRK (172 aa)) is disordered. Basic and acidic residues predominate over residues 325-339 (EKQERIAGKETRENR). A compositionally biased stretch (low complexity) spans 385 to 430 (SSRYGSSSRRAIPSSSRPSSAGGPSDSRSSSRLVTSTGGVGTVSNR). Over residues 431–449 (ASTSQRIQAGNESRTSSFS) the composition is skewed to polar residues. A compositionally biased stretch (basic and acidic residues) spans 454-464 (NTREDPLRRSL).

Belongs to the protein kinase superfamily. CK1 Ser/Thr protein kinase family. Casein kinase I subfamily. In terms of assembly, monomer. Autophosphorylated on serine, threonine and tyrosine residues. In terms of tissue distribution, expressed in leaves, stems and flowers.

It is found in the cytoplasm. Its subcellular location is the nucleus. The catalysed reaction is L-seryl-[protein] + ATP = O-phospho-L-seryl-[protein] + ADP + H(+). It carries out the reaction L-threonyl-[protein] + ATP = O-phospho-L-threonyl-[protein] + ADP + H(+). Casein kinases are operationally defined by their preferential utilization of acidic proteins such as caseins as substrates. Can phosphorylate casein on serine and threonine residues, and poly(Glu,Tyr) in vitro. In Arabidopsis thaliana (Mouse-ear cress), this protein is Casein kinase 1-like protein 9.